Here is a 350-residue protein sequence, read N- to C-terminus: Ion-translocating oxidoreductase complex subunit D (350 aa).

5 helical membrane passes run 19–39 (LMLL…WFFG), 41–61 (GTLI…ALVL), 67–87 (PVKP…IGLS), 88–108 (LPPL…IIIA), and 122–142 (PAMV…TSWL). Thr186 is modified (FMN phosphoryl threonine). Transmembrane regions (helical) follow at residues 213–233 (WGGI…LFLL), 242–262 (IPGA…LMTP), 264–284 (ATAT…AFFI), and 299–316 (LVYG…RRFG).

This sequence belongs to the NqrB/RnfD family. In terms of assembly, the complex is composed of six subunits: RnfA, RnfB, RnfC, RnfD, RnfE and RnfG. Requires FMN as cofactor.

It localises to the cell inner membrane. Functionally, part of a membrane-bound complex that couples electron transfer with translocation of ions across the membrane. The sequence is that of Ion-translocating oxidoreductase complex subunit D from Aeromonas hydrophila subsp. hydrophila (strain ATCC 7966 / DSM 30187 / BCRC 13018 / CCUG 14551 / JCM 1027 / KCTC 2358 / NCIMB 9240 / NCTC 8049).